Reading from the N-terminus, the 1083-residue chain is MGFLFSINRKLKMPRDGNEGMFTIPGFSQIQFEGFCRFIDQGLMEEFHKFPKIEDTDQEIEFQLFVERYQLVEPLIKERDAVYESLTYSSELYVPAGLIWKTGRDMQEQTIFIGNIPLMNSLGTFIVNGIYRIVINQILQSPGIYYRSELDHNGISVYTSTIISDWGGRSELEIDRKSRIWARVSRKQKISILVLSSAMGSNLREILDNVCYPEIFLSFLNDREKKKIGSKENAILEFYQQFACVGGDPVFSESLCKELQKKFFQQRCELGRIGRRNMNRRLNLDIPQSNTFLLPRDVLAAADHLIGMKFGMGTLDDMNHLKNKRIRSVADLLQDQFGLALVRLENAVRGTICGAIRHKLILTPQNLVSSTSLTTTYESFFGLHPLSQVLDRTNPLTQIVHGRKLSYLGPGGLTGRTASFRIRDIHPSHYGRICPIDTSEGINVGLIGSLAIHARIGHWGSIESPFYEVYQRSKETKMVFLSPSRDEYYTVATGNSLALNRGGIQEEQIVPARYRQEFLTIAWEQIHLRSIFPFQYFSIGASLIPFIEHNDANRALMSSNMQRQAVPLSRSEKCIVGTGLERQAALDSGVSAIAECEGKIIHTDTHKIVLSGHGDTISIPLVMYQRSNKNTCMHQNPQVRRGKCIKKGQILADGAATVGGELALGKNVLVAYMPWEGYNFEDAVLISERLVYEDIYTSFHIRKYEIQTHVTSQGPERITHEIPHLEAHLLRNLDRNGIVALGSWVETGDILVGKLTPQTANESSYAPEDRLLRAILGIQVSTAKETCLKLPIGGRGRVIDVRWIQKKGGSSYNPETIRVYISQKREIKVGDKVAGRHGNKGIISKILSRQDMPYLQDGTPVDMVFNPLGVPSRMNVGQIFECSLGLAGDLLDRHYRIAPFDERYEQEASRKLVFSELYEASKQTANPWVFEPEYPGKSRIFDGRTGDPFEQPVLIGKSYILKLIHQVDDKIHGRSSGHYALVTQQPLRGRAKQGGQRVGEMEVWALEGFGVAHILQEMLTYKSDHIRARQEVLGTTIIGGTIPTPEDAPESFRLLVRELRSLALELNHFLVSEKNFQINRKEA.

Belongs to the RNA polymerase beta chain family. In terms of assembly, in plastids the minimal PEP RNA polymerase catalytic core is composed of four subunits: alpha, beta, beta', and beta''. When a (nuclear-encoded) sigma factor is associated with the core the holoenzyme is formed, which can initiate transcription.

The protein localises to the plastid. It is found in the chloroplast. It carries out the reaction RNA(n) + a ribonucleoside 5'-triphosphate = RNA(n+1) + diphosphate. Its function is as follows. DNA-dependent RNA polymerase catalyzes the transcription of DNA into RNA using the four ribonucleoside triphosphates as substrates. In Acorus calamus var. americanus (American sweet flag), this protein is DNA-directed RNA polymerase subunit beta.